The sequence spans 391 residues: Lipoyl synthase, mitochondrial (391 aa).

The N-terminal 44 residues, 1-44 (MVHPHLSRTKRTFFSHSSQMISRHIRKTNSLAFVRALSASETAV), are a transit peptide targeting the mitochondrion. [4Fe-4S] cluster contacts are provided by cysteine 120, cysteine 125, cysteine 131, cysteine 150, cysteine 154, cysteine 157, and serine 365. The 220-residue stretch at 135–354 (KKSEATATIM…KEVALEMGFL (220 aa)) folds into the Radical SAM core domain.

This sequence belongs to the radical SAM superfamily. Lipoyl synthase family. The cofactor is [4Fe-4S] cluster.

The protein localises to the mitochondrion. The enzyme catalyses [[Fe-S] cluster scaffold protein carrying a second [4Fe-4S](2+) cluster] + N(6)-octanoyl-L-lysyl-[protein] + 2 oxidized [2Fe-2S]-[ferredoxin] + 2 S-adenosyl-L-methionine + 4 H(+) = [[Fe-S] cluster scaffold protein] + N(6)-[(R)-dihydrolipoyl]-L-lysyl-[protein] + 4 Fe(3+) + 2 hydrogen sulfide + 2 5'-deoxyadenosine + 2 L-methionine + 2 reduced [2Fe-2S]-[ferredoxin]. Its pathway is protein modification; protein lipoylation via endogenous pathway; protein N(6)-(lipoyl)lysine from octanoyl-[acyl-carrier-protein]: step 2/2. Its function is as follows. Catalyzes the radical-mediated insertion of two sulfur atoms into the C-6 and C-8 positions of the octanoyl moiety bound to the lipoyl domains of lipoate-dependent enzymes, thereby converting the octanoylated domains into lipoylated derivatives. In Clavispora lusitaniae (strain ATCC 42720) (Yeast), this protein is Lipoyl synthase, mitochondrial.